The primary structure comprises 41 residues: Large ribosomal subunit protein bL36 (41 aa).

Belongs to the bacterial ribosomal protein bL36 family.

The polypeptide is Large ribosomal subunit protein bL36 (Hyphomonas neptunium (strain ATCC 15444)).